The primary structure comprises 191 residues: Cytochrome c biogenesis ATP-binding export protein CcmA (191 aa).

In terms of domain architecture, ABC transporter spans 2–190; sequence LSLHQLQFKN…SIKSAQILRI (189 aa). 29–36 provides a ligand contact to ATP; sequence GANGCGKS.

Belongs to the ABC transporter superfamily. CcmA exporter (TC 3.A.1.107) family. The complex is composed of two ATP-binding proteins (CcmA) and two transmembrane proteins (CcmB).

It localises to the cell inner membrane. It carries out the reaction heme b(in) + ATP + H2O = heme b(out) + ADP + phosphate + H(+). In terms of biological role, part of the ABC transporter complex CcmAB involved in the biogenesis of c-type cytochromes; once thought to export heme, this seems not to be the case, but its exact role is uncertain. Responsible for energy coupling to the transport system. This Rickettsia conorii (strain ATCC VR-613 / Malish 7) protein is Cytochrome c biogenesis ATP-binding export protein CcmA.